A 289-amino-acid polypeptide reads, in one-letter code: MTAQLIDGNALAKQLRTEAAQRAAALTARGHQPGLAVILVGDDPASQVYVRNKIKACEDNGFLSIFDRYPADLTEADLLGRIDALNRDPRIHGILVQLPLPKHIDSHKVLEAIAPEKDVDGFHVANAGALMTGAPLFRPCTPYGCMKMLESIDYPVRGARAVVVGASNIVGKPMAMLLLQAGATVTICNSKTRDLAAHTREADIVVAAVGRRNIITADMVKPGAVVIDVGMNRDDAGKLCGDVDFAGVRDVAGHITPVPGGVGPMTITMLLINTLEAAERAAEDAALAA.

Residues 165-167 and serine 190 each bind NADP(+); that span reads GAS.

It belongs to the tetrahydrofolate dehydrogenase/cyclohydrolase family. In terms of assembly, homodimer.

The catalysed reaction is (6R)-5,10-methylene-5,6,7,8-tetrahydrofolate + NADP(+) = (6R)-5,10-methenyltetrahydrofolate + NADPH. It catalyses the reaction (6R)-5,10-methenyltetrahydrofolate + H2O = (6R)-10-formyltetrahydrofolate + H(+). It functions in the pathway one-carbon metabolism; tetrahydrofolate interconversion. In terms of biological role, catalyzes the oxidation of 5,10-methylenetetrahydrofolate to 5,10-methenyltetrahydrofolate and then the hydrolysis of 5,10-methenyltetrahydrofolate to 10-formyltetrahydrofolate. This Ralstonia nicotianae (strain ATCC BAA-1114 / GMI1000) (Ralstonia solanacearum) protein is Bifunctional protein FolD.